Reading from the N-terminus, the 304-residue chain is Mycothiol acetyltransferase (304 aa).

A 1D-myo-inositol 2-(L-cysteinylamino)-2-deoxy-alpha-D-glucopyranoside-binding site is contributed by Glu36. 73–75 (LFV) provides a ligand contact to acetyl-CoA. The N-acetyltransferase domain maps to 145-304 (LEIQTYTESV…EEHCVWAKSD (160 aa)). The 1D-myo-inositol 2-(L-cysteinylamino)-2-deoxy-alpha-D-glucopyranoside site is built by Glu179, Lys225, and Glu236. Residue 240 to 242 (VGL) participates in acetyl-CoA binding. A 1D-myo-inositol 2-(L-cysteinylamino)-2-deoxy-alpha-D-glucopyranoside-binding site is contributed by Tyr274. Acetyl-CoA is bound at residue 279–284 (NDPAVK).

Belongs to the acetyltransferase family. MshD subfamily. As to quaternary structure, monomer.

It catalyses the reaction 1D-myo-inositol 2-(L-cysteinylamino)-2-deoxy-alpha-D-glucopyranoside + acetyl-CoA = mycothiol + CoA + H(+). Its function is as follows. Catalyzes the transfer of acetyl from acetyl-CoA to desacetylmycothiol (Cys-GlcN-Ins) to form mycothiol. This chain is Mycothiol acetyltransferase, found in Corynebacterium aurimucosum (strain ATCC 700975 / DSM 44827 / CIP 107346 / CN-1) (Corynebacterium nigricans).